A 393-amino-acid chain; its full sequence is MAQVNIRRDVEDQFYRYKMEVLQGKVEGKGNGIKTVIVNLPNIARDLDRQPEYITKFFEIEFNAKSNIENEKYSINGQYTVERLASALDKFISKFVLCSFCKNPETKFVIKKGVIEFKCAACGRVGPIDMKHKLTSYIVKNPPKAVSTKSTHDEALAQQPQIKKEKKSKKKKDDDDEEDDVVWFTDTSEKAAEERKKKAIGDSTSAVISMMADISVEPQSAKEEQDEDDEQEEGQEKESDPVSSISSFLETNPADQELMEKLDSVQEEFGLRSSATSKAAIEALCKNAENTIKFVKTQTALLKKISKRRDGKLGILLGFEELCVKDETLLKSIQGILKNLFDAGILTEENILKWYHQKAKSKVVIKACKDFIAWLETAEEEEEDEEEDEEDDS.

GTP is bound at residue Gly-28–Thr-35. Disordered regions lie at residues Lys-144–Asp-179 and Glu-217–Ser-247. Positions Glu-223–Glu-385 constitute a W2 domain. Positions Glu-224–Glu-233 are enriched in acidic residues.

Belongs to the eIF-2-beta/eIF-5 family.

Catalyzes the hydrolysis of GTP bound to the 40S ribosomal initiation complex (40S.mRNA.Met-tRNA[F].eIF-2.GTP) with the subsequent joining of a 60S ribosomal subunit resulting in the release of eIF-2 and the guanine nucleotide. The subsequent joining of a 60S ribosomal subunit results in the formation of a functional 80S initiation complex (80S.mRNA.Met-tRNA[F]). The chain is Eukaryotic translation initiation factor 5 (eif5) from Dictyostelium discoideum (Social amoeba).